The primary structure comprises 462 residues: GTPase Der (462 aa).

2 consecutive EngA-type G domains span residues 2–164 (QKVI…EEKV) and 198–369 (IRVG…KNYT). Residues 8 to 15 (GKPNVGKS), 55 to 59 (DSGGL), 116 to 119 (NKID), 204 to 211 (GRVNVGKS), 251 to 255 (DTAGI), and 315 to 318 (NKWD) each bind GTP. Residues 370–454 (QKIQTSKLNE…PIVLIPKKRG (85 aa)) form the KH-like domain.

It belongs to the TRAFAC class TrmE-Era-EngA-EngB-Septin-like GTPase superfamily. EngA (Der) GTPase family. In terms of assembly, associates with the 50S ribosomal subunit.

In terms of biological role, GTPase that plays an essential role in the late steps of ribosome biogenesis. In Campylobacter concisus (strain 13826), this protein is GTPase Der.